The following is a 179-amino-acid chain: Acireductone dioxygenase (179 aa).

The Fe(2+) site is built by His99, His101, Glu105, and His143. Residues His99, His101, Glu105, and His143 each contribute to the Ni(2+) site.

Belongs to the acireductone dioxygenase (ARD) family. Monomer. It depends on Fe(2+) as a cofactor. Ni(2+) is required as a cofactor.

The catalysed reaction is 1,2-dihydroxy-5-(methylsulfanyl)pent-1-en-3-one + O2 = 3-(methylsulfanyl)propanoate + CO + formate + 2 H(+). The enzyme catalyses 1,2-dihydroxy-5-(methylsulfanyl)pent-1-en-3-one + O2 = 4-methylsulfanyl-2-oxobutanoate + formate + 2 H(+). Its pathway is amino-acid biosynthesis; L-methionine biosynthesis via salvage pathway; L-methionine from S-methyl-5-thio-alpha-D-ribose 1-phosphate: step 5/6. Catalyzes 2 different reactions between oxygen and the acireductone 1,2-dihydroxy-3-keto-5-methylthiopentene (DHK-MTPene) depending upon the metal bound in the active site. Fe-containing acireductone dioxygenase (Fe-ARD) produces formate and 2-keto-4-methylthiobutyrate (KMTB), the alpha-ketoacid precursor of methionine in the methionine recycle pathway. Ni-containing acireductone dioxygenase (Ni-ARD) produces methylthiopropionate, carbon monoxide and formate, and does not lie on the methionine recycle pathway. In Sulfurihydrogenibium sp. (strain YO3AOP1), this protein is Acireductone dioxygenase.